Reading from the N-terminus, the 223-residue chain is UPF0758 protein Cvib_1178 (223 aa).

Residues 100 to 222 form the MPN domain; that stretch reads KIQGARDVYE…WYSFRENNQL (123 aa). The Zn(2+) site is built by histidine 171, histidine 173, and aspartate 184. A JAMM motif motif is present at residues 171 to 184; sequence HNHPSGDTEPSNAD.

It belongs to the UPF0758 family.

The chain is UPF0758 protein Cvib_1178 from Chlorobium phaeovibrioides (strain DSM 265 / 1930) (Prosthecochloris vibrioformis (strain DSM 265)).